The chain runs to 486 residues: MVQLNQNFIDTITQELPAHLSMDEFIAACDRPLRRSIRVNTLKISSDDFKTLMQPKGWTFDPIPWCEDGFWISYDEEEQLGNALEHIQGLFYIQEASSMLPPTALFTPSAFTTSAKWQYVLDLASAPGSKTTQMAALMQNQGLLVANEYSASRVKVLHANVLRMGASHCALTHFDGRVFGEYLYESFDAVLIDAPCGGEGTVRKDADALKHWSLDDVLAISETQKALIESAFLALKPGGSLVYSTCTLNRLENQGVCEYLKQVYGDAVQFESLSDLFDGAERATTAEGFLHVWPQIYDSEGFFVAKLTKTASVPRLQPEPKLQKNFPFTTASAKQAQGIKDYFQQDLGISLPDELIMVRDDEFWLFPHEFNAFIGRMRFQRIGIKLADNSKHGFKVRHEAIIALAGKQLSPTAKTVDVSDVEAKEYLMGRDIPLATAGKAQGEVIVCYGGAPLGMAKHLGNKLKNNLPRDLVKDKVLLLPEQTKSL.

Residues 124–130 (ASAPGSK), E148, D175, and D193 contribute to the S-adenosyl-L-methionine site. C246 functions as the Nucleophile in the catalytic mechanism.

The protein belongs to the class I-like SAM-binding methyltransferase superfamily. RsmB/NOP family.

The protein localises to the cytoplasm. It carries out the reaction cytidine(1407) in 16S rRNA + S-adenosyl-L-methionine = 5-methylcytidine(1407) in 16S rRNA + S-adenosyl-L-homocysteine + H(+). Its function is as follows. Specifically methylates the cytosine at position 1407 (m5C1407) of 16S rRNA. This chain is Ribosomal RNA small subunit methyltransferase F, found in Shewanella baltica (strain OS185).